Reading from the N-terminus, the 284-residue chain is Bifunctional protein FolD 2 (284 aa).

Residues 166–168 and Ile232 each bind NADP(+); that span reads GAS.

The protein belongs to the tetrahydrofolate dehydrogenase/cyclohydrolase family. In terms of assembly, homodimer.

The enzyme catalyses (6R)-5,10-methylene-5,6,7,8-tetrahydrofolate + NADP(+) = (6R)-5,10-methenyltetrahydrofolate + NADPH. It carries out the reaction (6R)-5,10-methenyltetrahydrofolate + H2O = (6R)-10-formyltetrahydrofolate + H(+). It functions in the pathway one-carbon metabolism; tetrahydrofolate interconversion. Catalyzes the oxidation of 5,10-methylenetetrahydrofolate to 5,10-methenyltetrahydrofolate and then the hydrolysis of 5,10-methenyltetrahydrofolate to 10-formyltetrahydrofolate. In Colwellia psychrerythraea (strain 34H / ATCC BAA-681) (Vibrio psychroerythus), this protein is Bifunctional protein FolD 2.